Consider the following 259-residue polypeptide: Pimeloyl-[acyl-carrier protein] methyl ester esterase (259 aa).

Residues 16–241 enclose the AB hydrolase-1 domain; that stretch reads FVMLHGWGMN…QSAHVPFISH (226 aa). Residues Trp-22, 82–83, and 143–147 each bind substrate; these read SM and FLLLQ. Ser-82 (nucleophile) is an active-site residue. Residues Asp-207 and His-235 contribute to the active site. Substrate is bound at residue His-235.

The protein belongs to the AB hydrolase superfamily. Carboxylesterase BioH family. In terms of assembly, monomer.

The protein localises to the cytoplasm. The catalysed reaction is 6-carboxyhexanoyl-[ACP] methyl ester + H2O = 6-carboxyhexanoyl-[ACP] + methanol + H(+). The protein operates within cofactor biosynthesis; biotin biosynthesis. Functionally, the physiological role of BioH is to remove the methyl group introduced by BioC when the pimeloyl moiety is complete. It allows to synthesize pimeloyl-ACP via the fatty acid synthetic pathway through the hydrolysis of the ester bonds of pimeloyl-ACP esters. This is Pimeloyl-[acyl-carrier protein] methyl ester esterase from Hamiltonella defensa subsp. Acyrthosiphon pisum (strain 5AT).